Reading from the N-terminus, the 492-residue chain is Adenosylhomocysteinase (492 aa).

Substrate contacts are provided by T68, D153, and E215. 216 to 218 lines the NAD(+) pocket; sequence TTT. Substrate is bound by residues K245 and D249. NAD(+)-binding positions include N250, 279–284, E302, N337, 358–360, and N406; these read GYGDVG and IGH.

It belongs to the adenosylhomocysteinase family. NAD(+) is required as a cofactor.

The protein localises to the cytoplasm. The catalysed reaction is S-adenosyl-L-homocysteine + H2O = L-homocysteine + adenosine. It functions in the pathway amino-acid biosynthesis; L-homocysteine biosynthesis; L-homocysteine from S-adenosyl-L-homocysteine: step 1/1. Its function is as follows. May play a key role in the regulation of the intracellular concentration of adenosylhomocysteine. This chain is Adenosylhomocysteinase, found in Mycobacterium marinum (strain ATCC BAA-535 / M).